The sequence spans 406 residues: Argininosuccinate synthase (406 aa).

ATP contacts are provided by residues 14 to 22 (AYSGGLDTS) and Ala-41. L-citrulline contacts are provided by Tyr-92 and Ser-97. Residue Gly-122 participates in ATP binding. 3 residues coordinate L-aspartate: Thr-124, Asn-128, and Asp-129. Position 128 (Asn-128) interacts with L-citrulline. The L-citrulline site is built by Arg-132, Ser-181, Ser-190, Glu-266, and Tyr-278.

This sequence belongs to the argininosuccinate synthase family. Type 1 subfamily. As to quaternary structure, homotetramer.

The protein localises to the cytoplasm. It catalyses the reaction L-citrulline + L-aspartate + ATP = 2-(N(omega)-L-arginino)succinate + AMP + diphosphate + H(+). It functions in the pathway amino-acid biosynthesis; L-arginine biosynthesis; L-arginine from L-ornithine and carbamoyl phosphate: step 2/3. The sequence is that of Argininosuccinate synthase from Geobacter metallireducens (strain ATCC 53774 / DSM 7210 / GS-15).